A 489-amino-acid chain; its full sequence is N-succinylglutamate 5-semialdehyde dehydrogenase (489 aa).

221-226 (GSSGTG) contacts NAD(+). Residues E244 and C278 contribute to the active site.

The protein belongs to the aldehyde dehydrogenase family. AstD subfamily.

The enzyme catalyses N-succinyl-L-glutamate 5-semialdehyde + NAD(+) + H2O = N-succinyl-L-glutamate + NADH + 2 H(+). It functions in the pathway amino-acid degradation; L-arginine degradation via AST pathway; L-glutamate and succinate from L-arginine: step 4/5. Functionally, catalyzes the NAD-dependent reduction of succinylglutamate semialdehyde into succinylglutamate. This chain is N-succinylglutamate 5-semialdehyde dehydrogenase, found in Sorangium cellulosum (strain So ce56) (Polyangium cellulosum (strain So ce56)).